Here is a 445-residue protein sequence, read N- to C-terminus: Probable D-serine dehydratase (445 aa).

Residue K116 is modified to N6-(pyridoxal phosphate)lysine.

This sequence belongs to the serine/threonine dehydratase family. DsdA subfamily. Pyridoxal 5'-phosphate serves as cofactor.

The enzyme catalyses D-serine = pyruvate + NH4(+). In Bacillus mycoides (strain KBAB4) (Bacillus weihenstephanensis), this protein is Probable D-serine dehydratase.